The chain runs to 102 residues: Large ribosomal subunit protein bL21 (102 aa).

The protein belongs to the bacterial ribosomal protein bL21 family. In terms of assembly, part of the 50S ribosomal subunit. Contacts protein L20.

This protein binds to 23S rRNA in the presence of protein L20. In Pelobacter propionicus (strain DSM 2379 / NBRC 103807 / OttBd1), this protein is Large ribosomal subunit protein bL21.